Consider the following 380-residue polypeptide: Cytochrome b (380 aa).

4 helical membrane-spanning segments follow: residues 34 to 54 (FGSLLGLCLIAQIATGLFLAM), 78 to 99 (WLLRNLHANGASFFFICIYFHI), 114 to 134 (WNIGVILLFLLMATAFVGYVL), and 179 to 199 (FFTFHFILPFIITAVSLIHLL). Residues His-84 and His-98 each contribute to the heme b site. Heme b-binding residues include His-183 and His-197. His-202 lines the a ubiquinone pocket. A run of 4 helical transmembrane segments spans residues 227–247 (YKDLLGFVIMLGALASLSTFA), 289–309 (LGGVLAVVLSIMVLFLMPIIH), 321–341 (IAKTFFWALIANTAILTWIGG), and 348–368 (FITIGQIASGLYFLIFVLLIP).

Belongs to the cytochrome b family. The cytochrome bc1 complex contains 3 respiratory subunits (MT-CYB, CYC1 and UQCRFS1), 2 core proteins (UQCRC1 and UQCRC2) and probably 6 low-molecular weight proteins. Heme b serves as cofactor.

The protein resides in the mitochondrion inner membrane. Component of the ubiquinol-cytochrome c reductase complex (complex III or cytochrome b-c1 complex) that is part of the mitochondrial respiratory chain. The b-c1 complex mediates electron transfer from ubiquinol to cytochrome c. Contributes to the generation of a proton gradient across the mitochondrial membrane that is then used for ATP synthesis. In Rana amurensis (Siberian wood frog), this protein is Cytochrome b (mt-cyb).